The primary structure comprises 520 residues: MASNDKGMAPSLGSPWASQMGPWDAILKAVKDQLPSLDSDSPLSDYGEEELFIFQRNQTSLIPDLSEELAEDPADGDKSRAWVAAAEESLPEPVLVPAELATEPGCRQNTRTKDASSQEGRDPGRPFESSGEVSALLGMAEEPPRWLEGDLGSLSFNTKGSQGPPWDPQAEATLSCHEGDPKAEPLSTASQESVNRRALRQERRKMIETDILQKVTRDACGPTSSDKGGVKEAPCHAAESAPRSKMPLVEPPEGPPVLSLQQLEAWDLDDILQSLAGQEDNQGNRAPGTVWWAADHRQVQDRMVPSAHNRLMEQLALLCTTQSKASACARKVPADTPQDTKEADSGSRCASRKQGSQAGPGPQLAQGMRLNAESPTIFIDLRQMELPDHLSPESSSHSSSDSEEEEEEEMAALGDAEGASPSSLGLRTCTGKSQLLQQLRAFQKGTAQPELPASKGPAGGRAQAPEDTAGSRTGRKQHMKLCAKGQSAQARLPRGRPRALGDVPEPGAAREALMPPLEQL.

Disordered stretches follow at residues 93–202, 217–256, 328–366, and 388–520; these read PVLV…LRQE, RDAC…EGPP, CARK…QLAQ, and DHLS…LEQL. A compositionally biased stretch (basic and acidic residues) spans 111–125; that stretch reads RTKDASSQEGRDPGR. S161 carries the phosphoserine modification. S351 bears the Phosphoserine mark. The segment covering 401-410 has biased composition (acidic residues); sequence DSEEEEEEEM. Residues 420–437 show a composition bias toward polar residues; sequence SPSSLGLRTCTGKSQLLQ.

In terms of tissue distribution, expressed in respiratory ciliated cells (at protein level).

The protein resides in the dynein axonemal particle. The protein localises to the cytoplasm. Its function is as follows. In cyliated cells, dynein axonemal particle-specific protein required for deployment of ODA to the axoneme. Interacts with outer dynein arm (ODA) subunits. This Homo sapiens (Human) protein is Dynein axonemal assembly factor 8.